The chain runs to 82 residues: RNA-binding protein TTE2299 (82 aa).

This sequence belongs to the eukaryotic ribosomal protein eL8 family.

This chain is RNA-binding protein TTE2299, found in Caldanaerobacter subterraneus subsp. tengcongensis (strain DSM 15242 / JCM 11007 / NBRC 100824 / MB4) (Thermoanaerobacter tengcongensis).